We begin with the raw amino-acid sequence, 972 residues long: Serine/threonine-protein kinase ATG1 (972 aa).

The 302-residue stretch at 18-319 folds into the Protein kinase domain; sequence YVVEKEIGRG…FTEFFSNGLV (302 aa). Residues 24-32 and lysine 48 contribute to the ATP site; that span reads IGRGSFAVV. Aspartate 166 (proton acceptor) is an active-site residue. Disordered regions lie at residues 359-394, 424-444, 467-506, 562-605, and 743-764; these read KRAS…QSDQ, YNNQ…SNGR, ALQS…HRTT, ASQA…SRRP, and DDEE…NSSG. Basic and acidic residues predominate over residues 424–436; that stretch reads YNNQEERSNEERQ. Positions 562-584 are enriched in polar residues; it reads ASQALQMARHSSTSVSAANTAKQ. A compositionally biased stretch (low complexity) spans 585–605; sequence TLLRRNSRTLSSSGASTSRRP. Residues 750-759 show a composition bias toward basic and acidic residues; sequence EHSPGAETYR.

This sequence belongs to the protein kinase superfamily. Ser/Thr protein kinase family. APG1/unc-51/ULK1 subfamily. In terms of assembly, homodimer. Forms a ternary complex with ATG13 and ATG17.

Its subcellular location is the cytoplasm. The protein resides in the preautophagosomal structure membrane. The enzyme catalyses L-seryl-[protein] + ATP = O-phospho-L-seryl-[protein] + ADP + H(+). It catalyses the reaction L-threonyl-[protein] + ATP = O-phospho-L-threonyl-[protein] + ADP + H(+). Its function is as follows. Serine/threonine protein kinase involved in the cytoplasm to vacuole transport (Cvt) and found to be essential in autophagy, where it is required for the formation of autophagosomes. Involved in the clearance of protein aggregates which cannot be efficiently cleared by the proteasome. Required for selective autophagic degradation of the nucleus (nucleophagy) as well as for mitophagy which contributes to regulate mitochondrial quantity and quality by eliminating the mitochondria to a basal level to fulfill cellular energy requirements and preventing excess ROS production. Also involved in endoplasmic reticulum-specific autophagic process, in selective removal of ER-associated degradation (ERAD) substrates. Plays a key role in ATG9 and ATG23 cycling through the pre-autophagosomal structure and is necessary to promote ATG18 binding to ATG9 through phosphorylation of ATG9. Catalyzes phosphorylation of ATG4, decreasing the interaction between ATG4 and ATG8 and impairing deconjugation of PE-conjugated forms of ATG8. The sequence is that of Serine/threonine-protein kinase ATG1 from Eremothecium gossypii (strain ATCC 10895 / CBS 109.51 / FGSC 9923 / NRRL Y-1056) (Yeast).